A 35-amino-acid chain; its full sequence is MEALVYTFLLVSTLGIIFFAIFFREPPKLPTKGGK.

A helical transmembrane segment spans residues 3-23 (ALVYTFLLVSTLGIIFFAIFF).

The protein belongs to the PsbT family. PSII is composed of 1 copy each of membrane proteins PsbA, PsbB, PsbC, PsbD, PsbE, PsbF, PsbH, PsbI, PsbJ, PsbK, PsbL, PsbM, PsbT, PsbY, PsbZ, Psb30/Ycf12, at least 3 peripheral proteins of the oxygen-evolving complex and a large number of cofactors. It forms dimeric complexes.

It localises to the plastid. The protein localises to the chloroplast thylakoid membrane. Functionally, found at the monomer-monomer interface of the photosystem II (PS II) dimer, plays a role in assembly and dimerization of PSII. PSII is a light-driven water plastoquinone oxidoreductase, using light energy to abstract electrons from H(2)O, generating a proton gradient subsequently used for ATP formation. This Pinus thunbergii (Japanese black pine) protein is Photosystem II reaction center protein T.